The primary structure comprises 198 residues: DnaJ homolog subfamily C member 12 (198 aa).

Residue Met1 is modified to N-acetylmethionine. Positions 14-79 (DYYTLLGCDE…ESRARYDHWR (66 aa)) constitute a J domain. The segment at 121–183 (TNTAQNKERS…CGHLHFRWSG (63 aa)) is disordered. Residues 126–156 (NKERSEQRETKQGDPDSTPEKMMQKESESPE) show a composition bias toward basic and acidic residues. A phosphoserine mark is found at Ser160, Ser166, and Ser182.

In terms of assembly, interacts with HSPA8. Interacts with TPH1. Interacts with TPH2.

Its subcellular location is the cytoplasm. Functionally, probable co-chaperone that participates in the proper folding of biopterin-dependent aromatic amino acid hydroxylases, which include phenylalanine-4-hydroxylase (PAH), tyrosine 3-monooxygenase (TH) and peripheral and neuronal tryptophan hydroxylases (TPH1 and TPH2). The sequence is that of DnaJ homolog subfamily C member 12 (Dnajc12) from Rattus norvegicus (Rat).